A 413-amino-acid chain; its full sequence is Isobutyryl-CoA dehydrogenase, mitochondrial (413 aa).

A mitochondrion-targeting transit peptide spans 1-20; that stretch reads MAMLRSGYRRFGCLRAALKS. Residue Lys-48 is modified to N6-acetyllysine; alternate. The residue at position 48 (Lys-48) is an N6-succinyllysine; alternate. FAD contacts are provided by residues 156–165 and 189–191; these read YCLTEPGSGS and FIS. Ser-165 is a substrate binding site. An N6-succinyllysine modification is found at Lys-211. The residue at position 229 (Lys-229) is an N6-acetyllysine. The residue at position 269 (Lys-269) is an N6-succinyllysine. Residue 272–275 participates in substrate binding; sequence NGGR. FAD contacts are provided by residues Arg-300, 310–311, and 369–373; these read SQ and QMHGG. Glu-396 acts as the Proton acceptor in catalysis. FAD is bound at residue 398–400; sequence SNE. Position 408 (Arg-408) interacts with substrate.

This sequence belongs to the acyl-CoA dehydrogenase family. Homotetramer, formed by a dimer of dimers. Requires FAD as cofactor.

The protein resides in the mitochondrion. The catalysed reaction is 2-methylpropanoyl-CoA + oxidized [electron-transfer flavoprotein] + H(+) = 2-methylpropenoyl-CoA + reduced [electron-transfer flavoprotein]. It carries out the reaction (2S)-2-methylbutanoyl-CoA + oxidized [electron-transfer flavoprotein] + H(+) = (2E)-2-methylbut-2-enoyl-CoA + reduced [electron-transfer flavoprotein]. It catalyses the reaction propanoyl-CoA + oxidized [electron-transfer flavoprotein] + H(+) = acryloyl-CoA + reduced [electron-transfer flavoprotein]. It participates in amino-acid degradation; L-valine degradation. Its function is as follows. Isobutyryl-CoA dehydrogenase which catalyzes the conversion of 2-methylpropanoyl-CoA to (2E)-2-methylpropenoyl-CoA in the valine catabolic pathway. To a lesser extent, also able to catalyze the oxidation of (2S)-2-methylbutanoyl-CoA. This is Isobutyryl-CoA dehydrogenase, mitochondrial from Mus musculus (Mouse).